Here is a 295-residue protein sequence, read N- to C-terminus: uncharacterized protein (295 aa).

This is an uncharacterized protein from Acanthamoeba polyphaga (Amoeba).